Reading from the N-terminus, the 184-residue chain is F(420)H(2) dehydrogenase subunit B (184 aa).

A disordered region spans residues 1–20; the sequence is MGEVKETKTNNSKENPEEEV. Residues Cys-61, Cys-62, Cys-126, and Cys-156 each contribute to the [4Fe-4S] cluster site.

This sequence belongs to the complex I 20 kDa subunit family. As to quaternary structure, the FPO complex is composed of at least 13 different subunits. Requires FAD as cofactor. [4Fe-4S] cluster is required as a cofactor.

The protein localises to the cell inner membrane. It catalyses the reaction methanophenazine + reduced coenzyme F420-(gamma-L-Glu)(n) = dihydromethanophenazine + oxidized coenzyme F420-(gamma-L-Glu)(n) + H(+). Its function is as follows. Component of the F(420)H(2) dehydrogenase (FPO complex) which is part of the energy-conserving F(420)H(2):heterodisulfide oxidoreductase system. The membrane-bound electron transfer system of the complex plays an important role in the metabolism of methylotrophic methanogens when the organisms grow on methanol or methylamines. Catalyzes the oxidation of methanophenazine to dihydromethanophenazine. It shuttles electrons from F(420)H(2), via FAD and iron-sulfur (Fe-S) centers, to methanophenazine (an electron carrier in the membrane). It couples the redox reaction to proton translocation (for every two electrons transferred, two hydrogen ions are translocated across the cytoplasmic membrane), and thus conserves the redox energy in a proton gradient. It also catalyzes the oxidation of F(420)H(2) with quinones such as 2,3-dimethyl-1,4-naphthoquinone, 2-methyl-1,4-naphthoquinone and tetramethyl-p-benzoquinone. The polypeptide is F(420)H(2) dehydrogenase subunit B (fpoB) (Methanosarcina mazei (strain ATCC BAA-159 / DSM 3647 / Goe1 / Go1 / JCM 11833 / OCM 88) (Methanosarcina frisia)).